The chain runs to 262 residues: Tetrahydromethanopterin S-methyltransferase subunit C (262 aa).

7 helical membrane-spanning segments follow: residues 27–47 (LVGIYIAHFFPSLAMLLGGLL), 72–92 (PSIGMVSLGMGTISALAGVLI), 98–118 (LPVLVTPILAAVIAVVVGFIV), 145–165 (ALAILGFCTAFAGGFSADIII), 173–193 (VIALAFIAAGMAILHPFNACI), 200–220 (KRTMTLAVACGFMAWLVFAIA), and 222–242 (LDIVSTAVAAIFWFIAYGTFV).

It belongs to the MtrC family. In terms of assembly, the complex is composed of 8 subunits; MtrA, MtrB, MtrC, MtrD, MtrE, MtrF, MtrG and MtrH.

It is found in the cell membrane. The enzyme catalyses 5-methyl-5,6,7,8-tetrahydromethanopterin + coenzyme M + 2 Na(+)(in) = 5,6,7,8-tetrahydromethanopterin + methyl-coenzyme M + 2 Na(+)(out). Its pathway is one-carbon metabolism; methanogenesis from CO(2); methyl-coenzyme M from 5,10-methylene-5,6,7,8-tetrahydromethanopterin: step 2/2. Its function is as follows. Part of a complex that catalyzes the formation of methyl-coenzyme M and tetrahydromethanopterin from coenzyme M and methyl-tetrahydromethanopterin. This is an energy-conserving, sodium-ion translocating step. This is Tetrahydromethanopterin S-methyltransferase subunit C from Methanococcus maripaludis (strain C5 / ATCC BAA-1333).